Reading from the N-terminus, the 112-residue chain is UPF0212 protein Mboo_1659 (112 aa).

The protein belongs to the UPF0212 family.

In Methanoregula boonei (strain DSM 21154 / JCM 14090 / 6A8), this protein is UPF0212 protein Mboo_1659.